Here is a 214-residue protein sequence, read N- to C-terminus: Adenylate kinase (214 aa).

10-15 (GAGKGT) is a binding site for ATP. The tract at residues 30 to 59 (STGDMLRAAIKAGTELGKQAKAVIDAGQLV) is NMP. AMP contacts are provided by residues T31, R36, 57–59 (QLV), 85–88 (GFPR), and Q92. The interval 122 to 159 (GRRAHLPSGRTYHVVYNPPKVEGKDDVTGEDLVVRDDD) is LID. Residues R123 and 132–133 (TY) contribute to the ATP site. AMP contacts are provided by R156 and R167. K200 is an ATP binding site.

This sequence belongs to the adenylate kinase family. As to quaternary structure, monomer.

It localises to the cytoplasm. It catalyses the reaction AMP + ATP = 2 ADP. It participates in purine metabolism; AMP biosynthesis via salvage pathway; AMP from ADP: step 1/1. In terms of biological role, catalyzes the reversible transfer of the terminal phosphate group between ATP and AMP. Plays an important role in cellular energy homeostasis and in adenine nucleotide metabolism. This is Adenylate kinase from Vibrio parahaemolyticus serotype O3:K6 (strain RIMD 2210633).